The primary structure comprises 218 residues: Glycerol-3-phosphate acyltransferase (218 aa).

A run of 5 helical transmembrane segments spans residues 10 to 30 (LTLG…FGLI), 60 to 80 (DLAA…VLLA), 88 to 108 (PAII…PVWL), 125 to 145 (SAAW…AFLF), and 165 to 185 (AFDQ…LIFI).

The protein belongs to the PlsY family. In terms of assembly, probably interacts with PlsX.

Its subcellular location is the cell inner membrane. The catalysed reaction is an acyl phosphate + sn-glycerol 3-phosphate = a 1-acyl-sn-glycero-3-phosphate + phosphate. Its pathway is lipid metabolism; phospholipid metabolism. Its function is as follows. Catalyzes the transfer of an acyl group from acyl-phosphate (acyl-PO(4)) to glycerol-3-phosphate (G3P) to form lysophosphatidic acid (LPA). This enzyme utilizes acyl-phosphate as fatty acyl donor, but not acyl-CoA or acyl-ACP. This chain is Glycerol-3-phosphate acyltransferase, found in Caulobacter vibrioides (strain ATCC 19089 / CIP 103742 / CB 15) (Caulobacter crescentus).